We begin with the raw amino-acid sequence, 415 residues long: MGFDHRMETDQPPVVTATLLVPLQNGSCVEAAEALLPHGLMELHEEHSWMSNRTDLQYELNPGEVATASIFFGALWLFSIFGNSLVCLVIHRSRRTQSTTNYFVVSMACADLLISVASTPFVVLQFTTGRWTLGSAMCKVVRYFQYLTPGVQIYVLLSICIDRFYTIVYPLSFKVSREKAKRMIAASWILDAAFVTPVFFFYGSNWDSHCNYFLPPSWEGTAYTVIHFLVGFVIPSVLIILFYQKVIKYIWRIGTDGRTLRRTMNIVPRTKVKTVKMFLLLNLVFLFSWLPFHVAQLWHPHEQDYRKSSLVFTAVTWVSFSSSASKPTLYSIYNANFRRGMKETFCMSSMKCYRSNAYTITTSSRMAKRNYVGISEIPPVSRTITKDSIYDSFDREAREKKLAWPINSNPPNTFV.

Residues 1–69 (MGFDHRMETD…LNPGEVATAS (69 aa)) lie on the Extracellular side of the membrane. Residues N25 and N52 are each glycosylated (N-linked (GlcNAc...) asparagine). The chain crosses the membrane as a helical span at residues 70–90 (IFFGALWLFSIFGNSLVCLVI). The Cytoplasmic portion of the chain corresponds to 91–102 (HRSRRTQSTTNY). The helical transmembrane segment at 103–123 (FVVSMACADLLISVASTPFVV) threads the bilayer. Residues 124 to 152 (LQFTTGRWTLGSAMCKVVRYFQYLTPGVQ) are Extracellular-facing. C138 and C210 are disulfide-bonded. Residues 153 to 173 (IYVLLSICIDRFYTIVYPLSF) traverse the membrane as a helical segment. Over 174–182 (KVSREKAKR) the chain is Cytoplasmic. The chain crosses the membrane as a helical span at residues 183 to 203 (MIAASWILDAAFVTPVFFFYG). At 204 to 221 (SNWDSHCNYFLPPSWEGT) the chain is on the extracellular side. A helical transmembrane segment spans residues 222-242 (AYTVIHFLVGFVIPSVLIILF). Residues 243–277 (YQKVIKYIWRIGTDGRTLRRTMNIVPRTKVKTVKM) lie on the Cytoplasmic side of the membrane. A helical transmembrane segment spans residues 278–298 (FLLLNLVFLFSWLPFHVAQLW). At 299-309 (HPHEQDYRKSS) the chain is on the extracellular side. The chain crosses the membrane as a helical span at residues 310–332 (LVFTAVTWVSFSSSASKPTLYSI). Residues 333–415 (YNANFRRGMK…INSNPPNTFV (83 aa)) lie on the Cytoplasmic side of the membrane.

This sequence belongs to the G-protein coupled receptor 1 family. Abundant expression in the brain.

Its subcellular location is the cell membrane. Functionally, G-protein coupled receptor that plays a role in the regulation of circadian rhythms and energy metabolism. Participates in maintaining proper circadian gene expression in the suprachiasmatic nucleus (SCN), the locus of the master circadian clock in the brain. May function as a coordinator of aging-associated metabolic dysfunction, stress response, DNA integrity management, and eventual senescence. Upon binding to adropin, modulates mitochondrial energy metabolism via the p44/42-PDK4 signaling pathway, influencing pyruvate dehydrogenase activity. The sequence is that of Probable G-protein coupled receptor 19 (Gpr19) from Rattus norvegicus (Rat).